The chain runs to 431 residues: MIDIKLLEKKAETGTSYYDEYKQGLVNRGASTEVLEQIMELNKKRKELITQAETAKASQNKLSGEIGKIKREGGDASAILAEVDVLKTQVKELEAKAAEADQQVTNLALVIPNKPHSSVPVGSSEKDNKEIKVVGTPTQFSFKAKEHWELGEALNIIDFERAGKTTGTRFAFLKGAAAQMERALIQFMMDKHSMKHGYTEMIPPFMVNSNSLLGTGNFPKFKEDVFHLEGSDLYLIPTAEVPVTNYYNNEILDEKDLPQSFCAYSPCFRSEAGSAGRDTKGLIRQHQFDKVELMVFAHPDKSHEVHEALTSHAEQILMDLELPFRRVLLCTGDMGFGSAKTYDLEVWLPGQNAYREISSCSNFEDFQARRANIRFRSAGGKPQFVHTLNGSALAVGRTLVAILENYQREDGSVGIPKALQPYMGGRTEIRK.

Residue 238-240 participates in L-serine binding; that stretch reads TAE. An ATP-binding site is contributed by 269–271; that stretch reads RSE. Position 292 (E292) interacts with L-serine. 356–359 contacts ATP; sequence EISS. An L-serine-binding site is contributed by S391.

This sequence belongs to the class-II aminoacyl-tRNA synthetase family. Type-1 seryl-tRNA synthetase subfamily. In terms of assembly, homodimer. The tRNA molecule binds across the dimer.

The protein localises to the cytoplasm. The enzyme catalyses tRNA(Ser) + L-serine + ATP = L-seryl-tRNA(Ser) + AMP + diphosphate + H(+). It catalyses the reaction tRNA(Sec) + L-serine + ATP = L-seryl-tRNA(Sec) + AMP + diphosphate + H(+). The protein operates within aminoacyl-tRNA biosynthesis; selenocysteinyl-tRNA(Sec) biosynthesis; L-seryl-tRNA(Sec) from L-serine and tRNA(Sec): step 1/1. Functionally, catalyzes the attachment of serine to tRNA(Ser). Is also able to aminoacylate tRNA(Sec) with serine, to form the misacylated tRNA L-seryl-tRNA(Sec), which will be further converted into selenocysteinyl-tRNA(Sec). This is Serine--tRNA ligase from Bdellovibrio bacteriovorus (strain ATCC 15356 / DSM 50701 / NCIMB 9529 / HD100).